A 266-amino-acid polypeptide reads, in one-letter code: NADP-dependent mannitol dehydrogenase (266 aa).

The NADP(+) site is built by Ser53, Asn107, and Lys140. Ser159 serves as the catalytic Proton donor. NADP(+)-binding residues include Tyr174, Lys178, Ile206, and Thr208. Residue Tyr174 is the Proton acceptor of the active site. The Lowers pKa of active site Tyr role is filled by Lys178.

Belongs to the short-chain dehydrogenases/reductases (SDR) family. Homotetramer.

The catalysed reaction is D-mannitol + NADP(+) = D-fructose + NADPH + H(+). Its function is as follows. D-mannitol 2-dehydrogenase which is not necessary for D-mannitol catabolism. D-mannitol metabolism occurs via at least two different routes involving mannitol dehydrogenase (MDH) or mannitol 1-phosphate dehydrogenase, and the exact physiological role of mannitol dehydrogenases remains unclear. This Hypocrea jecorina (strain ATCC 56765 / BCRC 32924 / NRRL 11460 / Rut C-30) (Trichoderma reesei) protein is NADP-dependent mannitol dehydrogenase.